Reading from the N-terminus, the 270-residue chain is Glutamate racemase (270 aa).

Substrate contacts are provided by residues 10–11 (DS) and 42–43 (YG). Cys-73 serves as the catalytic Proton donor/acceptor. A substrate-binding site is contributed by 74–75 (NT). Cys-184 functions as the Proton donor/acceptor in the catalytic mechanism. 185-186 (TH) provides a ligand contact to substrate.

This sequence belongs to the aspartate/glutamate racemases family.

The enzyme catalyses L-glutamate = D-glutamate. It participates in cell wall biogenesis; peptidoglycan biosynthesis. Functionally, provides the (R)-glutamate required for cell wall biosynthesis. The sequence is that of Glutamate racemase from Geobacter metallireducens (strain ATCC 53774 / DSM 7210 / GS-15).